We begin with the raw amino-acid sequence, 353 residues long: MTAILERRESTSLWGRFCNWITSTENRLYIGWFGVLMIPTLLTATSVFIIAFIAAPPVDIDGIREPVSGSLLYGNNIISGAIIPTSAAIGLHFYPIWEAASVDEWLYNGGPYELIVLHFLLGVACYMGREWELSFRLGMRPWIAVAYSAPVAAATAVFLIYPIGQGSFSDGMPLGISGTFNFMIVFQAEHNILMHPFHMLGVAGVFGGSLFSAMHGSLVTSSLIRETTENESANEGYKFGQEEETYNIVAAHGYFGRLIFQYASFNNSRSLHFLLAAWPVVGIWFTALGISTMAFNLNGFNFNQSVVDSQGRVINTWADIINRANLGMEVMHERNAHNFPLDLAAVEAPSTNG.

T2 bears the N-acetylthreonine mark. T2 is subject to Phosphothreonine. 3 helical membrane passes run 29–46 (YIGW…TATS), 118–133 (HFLL…EWEL), and 142–156 (WIAV…AATA). Chlorophyll a is bound at residue H118. Pheophytin a is bound at residue Y126. [CaMn4O5] cluster contacts are provided by D170 and E189. The chain crosses the membrane as a helical span at residues 197–218 (FHMLGVAGVFGGSLFSAMHGSL). H198 serves as a coordination point for chlorophyll a. A quinone contacts are provided by residues H215 and 264 to 265 (SF). Residue H215 participates in Fe cation binding. H272 contributes to the Fe cation binding site. The chain crosses the membrane as a helical span at residues 274–288 (LLAAWPVVGIWFTAL). [CaMn4O5] cluster contacts are provided by H332, E333, D342, and A344. A propeptide spanning residues 345–353 (AVEAPSTNG) is cleaved from the precursor.

This sequence belongs to the reaction center PufL/M/PsbA/D family. As to quaternary structure, PSII is composed of 1 copy each of membrane proteins PsbA, PsbB, PsbC, PsbD, PsbE, PsbF, PsbH, PsbI, PsbJ, PsbK, PsbL, PsbM, PsbT, PsbX, PsbY, PsbZ, Psb30/Ycf12, at least 3 peripheral proteins of the oxygen-evolving complex and a large number of cofactors. It forms dimeric complexes. Requires The D1/D2 heterodimer binds P680, chlorophylls that are the primary electron donor of PSII, and subsequent electron acceptors. It shares a non-heme iron and each subunit binds pheophytin, quinone, additional chlorophylls, carotenoids and lipids. D1 provides most of the ligands for the Mn4-Ca-O5 cluster of the oxygen-evolving complex (OEC). There is also a Cl(-1) ion associated with D1 and D2, which is required for oxygen evolution. The PSII complex binds additional chlorophylls, carotenoids and specific lipids. as cofactor. Post-translationally, tyr-161 forms a radical intermediate that is referred to as redox-active TyrZ, YZ or Y-Z. C-terminally processed by CTPA; processing is essential to allow assembly of the oxygen-evolving complex and thus photosynthetic growth.

Its subcellular location is the plastid. It localises to the chloroplast thylakoid membrane. It carries out the reaction 2 a plastoquinone + 4 hnu + 2 H2O = 2 a plastoquinol + O2. Photosystem II (PSII) is a light-driven water:plastoquinone oxidoreductase that uses light energy to abstract electrons from H(2)O, generating O(2) and a proton gradient subsequently used for ATP formation. It consists of a core antenna complex that captures photons, and an electron transfer chain that converts photonic excitation into a charge separation. The D1/D2 (PsbA/PsbD) reaction center heterodimer binds P680, the primary electron donor of PSII as well as several subsequent electron acceptors. The sequence is that of Photosystem II protein D1 from Dioscorea elephantipes (Elephant's foot yam).